Reading from the N-terminus, the 303-residue chain is Elongation factor Ts (303 aa).

The interval 81–84 (TDFV) is involved in Mg(2+) ion dislocation from EF-Tu.

Belongs to the EF-Ts family.

The protein localises to the cytoplasm. In terms of biological role, associates with the EF-Tu.GDP complex and induces the exchange of GDP to GTP. It remains bound to the aminoacyl-tRNA.EF-Tu.GTP complex up to the GTP hydrolysis stage on the ribosome. In Mesomycoplasma hyopneumoniae (strain 232) (Mycoplasma hyopneumoniae), this protein is Elongation factor Ts.